We begin with the raw amino-acid sequence, 159 residues long: SsrA-binding protein (159 aa).

The tract at residues K133–G159 is disordered. Basic and acidic residues predominate over residues D137–G159.

The protein belongs to the SmpB family.

It localises to the cytoplasm. Required for rescue of stalled ribosomes mediated by trans-translation. Binds to transfer-messenger RNA (tmRNA), required for stable association of tmRNA with ribosomes. tmRNA and SmpB together mimic tRNA shape, replacing the anticodon stem-loop with SmpB. tmRNA is encoded by the ssrA gene; the 2 termini fold to resemble tRNA(Ala) and it encodes a 'tag peptide', a short internal open reading frame. During trans-translation Ala-aminoacylated tmRNA acts like a tRNA, entering the A-site of stalled ribosomes, displacing the stalled mRNA. The ribosome then switches to translate the ORF on the tmRNA; the nascent peptide is terminated with the 'tag peptide' encoded by the tmRNA and targeted for degradation. The ribosome is freed to recommence translation, which seems to be the essential function of trans-translation. The chain is SsrA-binding protein from Sinorhizobium medicae (strain WSM419) (Ensifer medicae).